The following is a 454-amino-acid chain: MEGGLRSPLNRAVRMAKYLLDSCIGMLPYPKQRCESFNVVDLLSTCSFYKAVSLKNLKLHIEQHPSFANPSLSHISKFAFTELPFHAFTFSIPKMSLDKQESPIPIVSNDKNIGIFESQNSSPNLSSHESTLDGNNMHTVSSEGSGAYAEHGPGIDHKIPQELEIQSKPDLLWSRVRHTMREPFSEFFGVFILILFGDGVVAQVVLSSGERGSYQSISWGWGIGVMLGVYASGVSGAHINPAVTFANCIFRKFPWRKFPIYMLAQVLGAMCASGVVYANYKSAIDMFEGGNNIRTVGLNTSSAGIFCTYPAPFMTKTGQFFSEFVASTILMFCIYALQDNGNLGSGNLTPLGLFFVIFGIGACFGWETGYAINLARDFGPRLMSYFLGYGHEVWSAGNYYFWVPMVAPFIGCLFGGWLYDVFIFTGESPINTPWMGLKRLMPGGLGSKKVDSKV.

Over 1-186 (MEGGLRSPLN…RHTMREPFSE (186 aa)) the chain is Cytoplasmic. A helical transmembrane segment spans residues 187 to 207 (FFGVFILILFGDGVVAQVVLS). At 208 to 216 (SGERGSYQS) the chain is on the extracellular side. The chain crosses the membrane as a helical span at residues 217–237 (ISWGWGIGVMLGVYASGVSGA). Topologically, residues 238–257 (HINPAVTFANCIFRKFPWRK) are cytoplasmic. Positions 240-242 (NPA) match the NPA 1 motif. A helical membrane pass occupies residues 258-278 (FPIYMLAQVLGAMCASGVVYA). The Extracellular portion of the chain corresponds to 279–316 (NYKSAIDMFEGGNNIRTVGLNTSSAGIFCTYPAPFMTK). Residue Asn-299 is glycosylated (N-linked (GlcNAc...) asparagine). A helical membrane pass occupies residues 317 to 337 (TGQFFSEFVASTILMFCIYAL). The Cytoplasmic segment spans residues 338 to 351 (QDNGNLGSGNLTPL). Residues 352–372 (GLFFVIFGIGACFGWETGYAI) traverse the membrane as a helical segment. Residues 373–375 (NLA) carry the NPA 2 motif. The Extracellular portion of the chain corresponds to 373-403 (NLARDFGPRLMSYFLGYGHEVWSAGNYYFWV). Residues 404 to 424 (PMVAPFIGCLFGGWLYDVFIF) form a helical membrane-spanning segment. Over 425–454 (TGESPINTPWMGLKRLMPGGLGSKKVDSKV) the chain is Cytoplasmic.

The protein belongs to the MIP/aquaporin (TC 1.A.8) family.

It localises to the membrane. The catalysed reaction is H2O(in) = H2O(out). It carries out the reaction glycerol(in) = glycerol(out). In terms of biological role, water channel required to facilitate the transport of water across membranes. May play a role in the vegetative growth and pathogenicity. This Botryotinia fuckeliana (strain B05.10) (Noble rot fungus) protein is Aquaglyceroporin-9.